Here is a 547-residue protein sequence, read N- to C-terminus: ATP synthase subunit alpha (547 aa).

Gly-173–Thr-180 is an ATP binding site.

The protein belongs to the ATPase alpha/beta chains family. F-type ATPases have 2 components, CF(1) - the catalytic core - and CF(0) - the membrane proton channel. CF(1) has five subunits: alpha(3), beta(3), gamma(1), delta(1), epsilon(1). CF(0) has three main subunits: a(1), b(2) and c(9-12). The alpha and beta chains form an alternating ring which encloses part of the gamma chain. CF(1) is attached to CF(0) by a central stalk formed by the gamma and epsilon chains, while a peripheral stalk is formed by the delta and b chains.

The protein localises to the cell membrane. The catalysed reaction is ATP + H2O + 4 H(+)(in) = ADP + phosphate + 5 H(+)(out). Produces ATP from ADP in the presence of a proton gradient across the membrane. The alpha chain is a regulatory subunit. The protein is ATP synthase subunit alpha of Thermobifida fusca (strain YX).